Reading from the N-terminus, the 340-residue chain is Photosystem II protein D1 (340 aa).

The next 3 helical transmembrane spans lie at 25-42 (YIGWFGLLVFPLLSLATV), 114-129 (HFFLGVCGWMGREWEF), and 138-152 (WIFVAFSAPIAAAAA). H114 provides a ligand contact to chlorophyll a. A pheophytin a-binding site is contributed by W122. D166 and E185 together coordinate [CaMn4O5] cluster. Residues 193–214 (FHILGVAGVFGGSLFSAMHGSL) traverse the membrane as a helical segment. Residue H194 participates in chlorophyll a binding. A quinone is bound by residues H211 and 260–261 (SF). H211 lines the Fe cation pocket. H268 contacts Fe cation. A helical membrane pass occupies residues 270–284 (FLAAWPVIGIWFTSL). [CaMn4O5] cluster is bound by residues H328, E329, D338, and A340.

It belongs to the reaction center PufL/M/PsbA/D family. As to quaternary structure, PSII is composed of 1 copy each of membrane proteins PsbA, PsbB, PsbC, PsbD, PsbE, PsbF, PsbH, PsbI, PsbJ, PsbK, PsbL, PsbM, PsbT, PsbX, PsbY, PsbZ, Psb30/Ycf12, at least 3 peripheral proteins of the oxygen-evolving complex and a large number of cofactors. It forms dimeric complexes. It depends on The D1/D2 heterodimer binds P680, chlorophylls that are the primary electron donor of PSII, and subsequent electron acceptors. It shares a non-heme iron and each subunit binds pheophytin, quinone, additional chlorophylls, carotenoids and lipids. D1 provides most of the ligands for the Mn4-Ca-O5 cluster of the oxygen-evolving complex (OEC). There is also a Cl(-1) ion associated with D1 and D2, which is required for oxygen evolution. The PSII complex binds additional chlorophylls, carotenoids and specific lipids. as a cofactor. Post-translationally, tyr-157 forms a radical intermediate that is referred to as redox-active TyrZ, YZ or Y-Z.

Its subcellular location is the plastid. It localises to the chloroplast thylakoid membrane. It carries out the reaction 2 a plastoquinone + 4 hnu + 2 H2O = 2 a plastoquinol + O2. Functionally, photosystem II (PSII) is a light-driven water:plastoquinone oxidoreductase that uses light energy to abstract electrons from H(2)O, generating O(2) and a proton gradient subsequently used for ATP formation. It consists of a core antenna complex that captures photons, and an electron transfer chain that converts photonic excitation into a charge separation. The D1/D2 (PsbA/PsbD) reaction center heterodimer binds P680, the primary electron donor of PSII as well as several subsequent electron acceptors. This is Photosystem II protein D1 from Amphidinium operculatum (Dinoflagellate).